The sequence spans 139 residues: UPF0310 protein RSal33209_2865 (139 aa).

The protein belongs to the UPF0310 family.

In Renibacterium salmoninarum (strain ATCC 33209 / DSM 20767 / JCM 11484 / NBRC 15589 / NCIMB 2235), this protein is UPF0310 protein RSal33209_2865.